We begin with the raw amino-acid sequence, 317 residues long: Transaldolase (317 aa).

K132 functions as the Schiff-base intermediate with substrate in the catalytic mechanism.

It belongs to the transaldolase family. Type 1 subfamily. Homodimer.

The protein resides in the cytoplasm. The catalysed reaction is D-sedoheptulose 7-phosphate + D-glyceraldehyde 3-phosphate = D-erythrose 4-phosphate + beta-D-fructose 6-phosphate. The protein operates within carbohydrate degradation; pentose phosphate pathway; D-glyceraldehyde 3-phosphate and beta-D-fructose 6-phosphate from D-ribose 5-phosphate and D-xylulose 5-phosphate (non-oxidative stage): step 2/3. Transaldolase is important for the balance of metabolites in the pentose-phosphate pathway. This Haemophilus influenzae (strain PittGG) protein is Transaldolase.